The chain runs to 433 residues: Histidinol dehydrogenase (433 aa).

Tyr-133, Gln-194, and Asn-217 together coordinate NAD(+). Residues Ser-240, Gln-262, and His-265 each contribute to the substrate site. Zn(2+) is bound by residues Gln-262 and His-265. Active-site proton acceptor residues include Glu-330 and His-331. The substrate site is built by His-331, Asp-364, Glu-418, and His-423. Asp-364 contacts Zn(2+). His-423 is a Zn(2+) binding site.

This sequence belongs to the histidinol dehydrogenase family. The cofactor is Zn(2+).

It carries out the reaction L-histidinol + 2 NAD(+) + H2O = L-histidine + 2 NADH + 3 H(+). Its pathway is amino-acid biosynthesis; L-histidine biosynthesis; L-histidine from 5-phospho-alpha-D-ribose 1-diphosphate: step 9/9. Functionally, catalyzes the sequential NAD-dependent oxidations of L-histidinol to L-histidinaldehyde and then to L-histidine. This is Histidinol dehydrogenase from Dechloromonas aromatica (strain RCB).